Reading from the N-terminus, the 148-residue chain is Putative carbonic anhydrase (148 aa).

The region spanning 1 to 146 (CLKRLQPGEM…LNGRTVFEVH (146 aa)) is the Alpha-carbonic anhydrase domain.

Belongs to the alpha-carbonic anhydrase family. Requires Zn(2+) as cofactor. As to expression, component of the acid-insoluble organic matrix of the aragonitic skeleton (at protein level).

The protein resides in the secreted. It carries out the reaction hydrogencarbonate + H(+) = CO2 + H2O. Its function is as follows. Reversible hydration of carbon dioxide. In Acropora millepora (Staghorn coral), this protein is Putative carbonic anhydrase.